A 221-amino-acid polypeptide reads, in one-letter code: UPF0758 protein KPN78578_39390 (221 aa).

Residues 99-221 (ALVTPSMTRE…YVSFAERGWI (123 aa)) form the MPN domain. Residues His-170, His-172, and Asp-183 each contribute to the Zn(2+) site. The JAMM motif signature appears at 170–183 (HNHPSGSPEPSQAD).

This sequence belongs to the UPF0758 family. YicR subfamily.

This is UPF0758 protein KPN78578_39390 from Klebsiella pneumoniae subsp. pneumoniae (strain ATCC 700721 / MGH 78578).